Consider the following 217-residue polypeptide: uncharacterized protein (217 aa).

Residues 98 to 203 (QRRQYVRTDA…GDQQALLQYC (106 aa)) enclose the PilZ domain.

This is an uncharacterized protein from Bacillus subtilis (strain 168).